The chain runs to 496 residues: NADH-quinone oxidoreductase subunit N (496 aa).

13 helical membrane passes run 16–36 (SLSP…VGAI), 46–66 (CVFC…FNGL), 79–99 (ISII…PLAL), 116–136 (FLFM…LIIF), 166–186 (FAMG…FYLA), 208–228 (LIIL…LSLI), 245–267 (LAGY…IFAM), 278–298 (DMLY…ALVQ), 304–324 (MLAF…VANS), 331–351 (LFFY…MLWV), 382–402 (AVIM…SVFW), 422–442 (IIMI…VFMF), and 464–484 (VIVG…GAIL).

The protein belongs to the complex I subunit 2 family. NDH-1 is composed of 14 different subunits. Subunits NuoA, H, J, K, L, M, N constitute the membrane sector of the complex.

Its subcellular location is the cell inner membrane. It catalyses the reaction a quinone + NADH + 5 H(+)(in) = a quinol + NAD(+) + 4 H(+)(out). Functionally, NDH-1 shuttles electrons from NADH, via FMN and iron-sulfur (Fe-S) centers, to quinones in the respiratory chain. The immediate electron acceptor for the enzyme in this species is believed to be ubiquinone. Couples the redox reaction to proton translocation (for every two electrons transferred, four hydrogen ions are translocated across the cytoplasmic membrane), and thus conserves the redox energy in a proton gradient. The protein is NADH-quinone oxidoreductase subunit N of Campylobacter concisus (strain 13826).